Consider the following 94-residue polypeptide: MRKYETVFILNPALDEEGYKANVEKFKGVIENSGGTVDNVDLWGKRKLAYEVKKVSEGYYTLMNFTADTELPKELDRVFRITDTVIRHMIITQE.

Belongs to the bacterial ribosomal protein bS6 family.

Functionally, binds together with bS18 to 16S ribosomal RNA. The chain is Small ribosomal subunit protein bS6 from Clostridium botulinum (strain Loch Maree / Type A3).